The chain runs to 515 residues: Cell division control protein 6 homolog (515 aa).

The span at 1–24 shows a compositional bias: low complexity; the sequence is MPTLRSATASASTAGTASPTAIAT. The disordered stretch occupies residues 1–70; the sequence is MPTLRSATAS…TPKLLSASPR (70 aa). The span at 43–52 shows a compositional bias: polar residues; it reads DASQFTSPHK.

Belongs to the CDC6/cdc18 family.

The protein localises to the nucleus. Its function is as follows. May be involved in the initiation of DNA replication. The chain is Cell division control protein 6 homolog from Oryza sativa subsp. japonica (Rice).